The following is a 439-amino-acid chain: Protein translocase subunit SecY (439 aa).

The next 10 membrane-spanning stretches (helical) occupy residues 23-43 (IASV…PIPG), 77-97 (IFAL…LLTL), 125-145 (LVLA…ISGM), 154-174 (FYFY…LMWL), 187-207 (ISII…VHTI), 217-237 (ILLF…VVFI), 274-294 (VIPA…ISWF), 317-337 (YLIL…GLVF), 369-389 (IMIR…LIPE), and 397-417 (VPFY…MDFI).

This sequence belongs to the SecY/SEC61-alpha family. In terms of assembly, component of the Sec protein translocase complex. Heterotrimer consisting of SecY, SecE and SecG subunits. The heterotrimers can form oligomers, although 1 heterotrimer is thought to be able to translocate proteins. Interacts with the ribosome. Interacts with SecDF, and other proteins may be involved. Interacts with SecA.

The protein resides in the cell membrane. In terms of biological role, the central subunit of the protein translocation channel SecYEG. Consists of two halves formed by TMs 1-5 and 6-10. These two domains form a lateral gate at the front which open onto the bilayer between TMs 2 and 7, and are clamped together by SecE at the back. The channel is closed by both a pore ring composed of hydrophobic SecY resides and a short helix (helix 2A) on the extracellular side of the membrane which forms a plug. The plug probably moves laterally to allow the channel to open. The ring and the pore may move independently. This is Protein translocase subunit SecY from Buchnera aphidicola subsp. Schizaphis graminum (strain Sg).